The following is a 454-amino-acid chain: Growth/differentiation factor 9 (454 aa).

The signal sequence occupies residues 1-24 (MARPNKFLLWFCCFAWLCFPISLG). The propeptide occupies 25 to 319 (SQASGGEAQI…GRSSHHRHRR (295 aa)). 5 N-linked (GlcNAc...) asparagine glycosylation sites follow: N106, N163, N236, N255, and N268. Positions 303-330 (GEEAAEDGRSSHHRHRRGQETVSSELKK) are disordered. Position 325 is a phosphoserine; by CK (S325). The N-linked (GlcNAc...) asparagine glycan is linked to N338. 3 cysteine pairs are disulfide-bonded: C353–C419, C382–C451, and C386–C453.

It belongs to the TGF-beta family. In terms of assembly, homodimer or heterodimer (Potential). But, in contrast to other members of this family, cannot be disulfide-linked. Post-translationally, phosphorylated; phosphorylation is critical for GDF9 function. In vitro, can be phosphorylated by CK at Ser-325. Expressed in ovarian granulosa cells. Present in oocytes of primary follicles (at protein level).

Its subcellular location is the secreted. In terms of biological role, required for ovarian folliculogenesis. Promotes primordial follicle development. Stimulates granulosa cell proliferation. Promotes cell transition from G0/G1 to S and G2/M phases, through an increase of CCND1 and CCNE1 expression, and RB1 phosphorylation. It regulates STAR expression and cAMP-dependent progesterone release in granulosa and thecal cells. Attenuates the suppressive effects of activin A on STAR expression and progesterone production by increasing the expression of inhibin B. It suppresses FST and FSTL3 production in granulosa-lutein cells. The chain is Growth/differentiation factor 9 (GDF9) from Homo sapiens (Human).